A 488-amino-acid chain; its full sequence is Ribulose bisphosphate carboxylase large chain (488 aa).

Positions 127 and 177 each coordinate substrate. Lys-179 acts as the Proton acceptor in catalysis. Lys-181 serves as a coordination point for substrate. The Mg(2+) site is built by Lys-205, Asp-207, and Glu-208. Lys-205 is subject to N6-carboxylysine. His-297 (proton acceptor) is an active-site residue. Residues Arg-298, His-330, and Ser-382 each coordinate substrate.

This sequence belongs to the RuBisCO large chain family. Type I subfamily. Heterohexadecamer of 8 large chains and 8 small chains. Mg(2+) is required as a cofactor.

It localises to the plastid. Its subcellular location is the chloroplast. It catalyses the reaction 2 (2R)-3-phosphoglycerate + 2 H(+) = D-ribulose 1,5-bisphosphate + CO2 + H2O. The enzyme catalyses D-ribulose 1,5-bisphosphate + O2 = 2-phosphoglycolate + (2R)-3-phosphoglycerate + 2 H(+). RuBisCO catalyzes two reactions: the carboxylation of D-ribulose 1,5-bisphosphate, the primary event in carbon dioxide fixation, as well as the oxidative fragmentation of the pentose substrate in the photorespiration process. Both reactions occur simultaneously and in competition at the same active site. The sequence is that of Ribulose bisphosphate carboxylase large chain from Antithamnion sp. (Red alga).